Here is a 400-residue protein sequence, read N- to C-terminus: Nicotinate phosphoribosyltransferase (400 aa).

H220 is modified (phosphohistidine; by autocatalysis).

This sequence belongs to the NAPRTase family. In terms of processing, transiently phosphorylated on a His residue during the reaction cycle. Phosphorylation strongly increases the affinity for substrates and increases the rate of nicotinate D-ribonucleotide production. Dephosphorylation regenerates the low-affinity form of the enzyme, leading to product release.

It carries out the reaction nicotinate + 5-phospho-alpha-D-ribose 1-diphosphate + ATP + H2O = nicotinate beta-D-ribonucleotide + ADP + phosphate + diphosphate. It participates in cofactor biosynthesis; NAD(+) biosynthesis; nicotinate D-ribonucleotide from nicotinate: step 1/1. Its function is as follows. Catalyzes the synthesis of beta-nicotinate D-ribonucleotide from nicotinate and 5-phospho-D-ribose 1-phosphate at the expense of ATP. This Escherichia coli O17:K52:H18 (strain UMN026 / ExPEC) protein is Nicotinate phosphoribosyltransferase.